The following is a 584-amino-acid chain: MTAVAPRVDGHVAPQRPEPTGHARKGSKAWLMMTTTDHKQLGIMYIIMSFSFFFLGGLMALLIRAELFTPGLQFLSNEQFNQLFTMHGTVMLLLYGTPIVWGFANYVLPLQIGAPDVAFPRLNAFGFWITTVGGVAMLTGFLTPGGAADFGWTMYSPLSDAIHSPGLGSDMWIVGVGATGIGSVASAINMLTTILCLRAPGMTMFRMPIFTWNIFVVSVLALLIFPLLLAAALGVLYDRKLGGHLYDPANGGSLLWQHLFWFFGHPEVYVLALPFFGIVSEIIPVFSRKPMFGYVGLIFATLSIGALSMAVWAHHMFVTGAVLLPFFSFMTFLISVPTGVKFFNWVGTMWKGHITWETPMIWSVGFMATFLFGGLTGIMLASPPLDFHLADSYFLIAHFHYTLFGTVVFASCAGVYFWFPKMTGRMMDERLGKIHFWLTFVGFHGTFLIQHWVGNMGMPRRYADYLDSDGFTIYNQISTVFSFLLGLSVIPFIWNVFKSWRYGELVTVDDPWGYGNSLEWATSCPPPRHNFASLPRIRSERPAFELHYPHMIERMRAEAHTGHHDDINAPELGTAPALASDSSR.

A disordered region spans residues 1–25 (MTAVAPRVDGHVAPQRPEPTGHARK). A helical transmembrane segment spans residues 43-63 (IMYIIMSFSFFFLGGLMALLI). His87 is a binding site for Fe(II)-heme a. 6 helical membrane passes run 90–110 (VMLLLYGTPIVWGFANYVLPL), 122–142 (LNAFGFWITTVGGVAMLTGFL), 171–191 (MWIVGVGATGIGSVASAINML), 214–234 (IFVVSVLALLIFPLLLAAALG), 259–279 (LFWFFGHPEVYVLALPFFGIV), and 292–312 (FGYVGLIFATLSIGALSMAVW). 2 residues coordinate Cu cation: His265 and Tyr269. The segment at residues 265-269 (HPEVY) is a cross-link (1'-histidyl-3'-tyrosine (His-Tyr)). Cu cation contacts are provided by His314 and His315. 2 helical membrane-spanning segments follow: residues 316–336 (MFVTGAVLLPFFSFMTFLISV) and 360–380 (MIWSVGFMATFLFGGLTGIML). His398 is a heme a3 binding site. The next 3 membrane-spanning stretches (helical) occupy residues 399 to 419 (FHYTLFGTVVFASCAGVYFWF), 434 to 454 (IHFWLTFVGFHGTFLIQHWVG), and 477 to 497 (ISTVFSFLLGLSVIPFIWNVF). His400 serves as a coordination point for Fe(II)-heme a. The segment at 564-584 (HDDINAPELGTAPALASDSSR) is disordered.

In terms of assembly, associates with subunits II, III and IV to form cytochrome c oxidase. The 4 subunit cytochrome c oxidase forms a supercomplex with the menaquinol-cytochrome c reductase complex (cytochrome bc1). Requires Cu(2+) as cofactor. Heme serves as cofactor.

It is found in the cell membrane. It catalyses the reaction 4 Fe(II)-[cytochrome c] + O2 + 8 H(+)(in) = 4 Fe(III)-[cytochrome c] + 2 H2O + 4 H(+)(out). It participates in energy metabolism; oxidative phosphorylation. Functionally, cytochrome c oxidase is the component of the respiratory chain that catalyzes the reduction of oxygen to water. Subunits 1-3 form the functional core of the enzyme complex. CO I is the catalytic subunit of the enzyme. Electrons originating in cytochrome c are transferred via the copper A center of subunit 2 and heme A of subunit 1 to the bimetallic center formed by heme A3 and copper B. In Corynebacterium glutamicum (strain ATCC 13032 / DSM 20300 / JCM 1318 / BCRC 11384 / CCUG 27702 / LMG 3730 / NBRC 12168 / NCIMB 10025 / NRRL B-2784 / 534), this protein is Cytochrome c oxidase subunit 1 (ctaD).